The chain runs to 502 residues: Protein IWS1 homolog 1 (502 aa).

Over residues 1 to 12 (MGFEDDPYRDVD) the composition is skewed to basic and acidic residues. Disordered stretches follow at residues 1–61 (MGFE…DNDK) and 87–208 (DEDV…DEDE). 3 stretches are compositionally biased toward acidic residues: residues 13-22 (GEPIVDFDDF), 34-49 (QDFDEDLADDIGDWDG), and 87-97 (DEDVDDAEFDE). 2 stretches are compositionally biased toward basic and acidic residues: residues 138–151 (NRGERKSEEIDEMW) and 181–194 (PSERYGGDAGDRSP). Tyrosine 185 carries the post-translational modification Phosphotyrosine. In terms of domain architecture, TFIIS N-terminal spans 287–370 (TLLKNWLEPL…DKWSRPIFNK (84 aa)). The interval 385–434 (VPYRRPPVKKPSNKATMESRDGDFDLEIRERKTGLTSGQSSRGDRQMTMR) is disordered. Over residues 401–417 (MESRDGDFDLEIRERKT) the composition is skewed to basic and acidic residues.

The protein belongs to the IWS1 family. As to quaternary structure, interacts with BZR2/BES1 and SPT6 (via N-terminus). Interacts with ASHH2/SDG8.

It localises to the nucleus. Functionally, transcription factor involved in RNA polymerase II (RNAPII) transcription regulation. Involved in transcription elongation. May function at post-recruitment and elongation steps of transcription. May be recruited by BZR2/BES1 to target genes and promote their expression during transcription elongation process. Required for brassinosteroid (BR)-induced gene expression. Required the for regulation of numerous nitrogen-responsive genes in roots. Acts in roots to repress NRT2.1 transcription in response to high nitrogen supply. This repression is associated with an IWS1-dependent increase of trimethylation on 'Lys-27' H3K27me3 at the NRT2.1 locus. This Arabidopsis thaliana (Mouse-ear cress) protein is Protein IWS1 homolog 1.